We begin with the raw amino-acid sequence, 663 residues long: Chaperone protein HtpG (663 aa).

The interval 1 to 352 is a; substrate-binding; sequence MTKQTLSFQA…SADLPLNVSR (352 aa). The span at 218–228 shows a compositional bias: basic and acidic residues; sequence ELINPSDEKGG. The tract at residues 218 to 237 is disordered; that stretch reads ELINPSDEKGGRQPGGMVKT. Residues 353–595 are b; sequence ELLQESRDVK…DHGMSTQLAR (243 aa). The c stretch occupies residues 596–663; sequence MLKQAGQAAP…YVKRVNALLV (68 aa).

The protein belongs to the heat shock protein 90 family. As to quaternary structure, homodimer.

It is found in the cytoplasm. Molecular chaperone. Has ATPase activity. The sequence is that of Chaperone protein HtpG from Albidiferax ferrireducens (strain ATCC BAA-621 / DSM 15236 / T118) (Rhodoferax ferrireducens).